A 282-amino-acid polypeptide reads, in one-letter code: Peptidoglycan-recognition protein LD (282 aa).

The disordered stretch occupies residues 1 to 29 (MDSSHIAVRVARRSPSPAAVSQSSYGSLG). Over 1–88 (MDSSHIAVRV…RRNPTLHEDC (88 aa)) the chain is Cytoplasmic. The helical transmembrane segment at 89-111 (FNWRSVGLLVMCASALALAAYLL) threads the bilayer. Over 112–282 (WRQTQTPDFG…PHYASHQTSK (171 aa)) the chain is Extracellular. Cys162 and Cys166 form a disulfide bridge. N-linked (GlcNAc...) asparagine glycosylation occurs at Asn222.

It belongs to the N-acetylmuramoyl-L-alanine amidase 2 family. In terms of tissue distribution, expressed in uninduced hemocytes and mbn-2 cells.

It is found in the cell membrane. Functionally, peptidoglycan-recognition protein probably involved in innate immunity by binding to peptidoglycans (PGN) of bacteria and activating the immune response. This Drosophila melanogaster (Fruit fly) protein is Peptidoglycan-recognition protein LD (PGRP-LD).